Reading from the N-terminus, the 37-residue chain is Cytochrome b6-f complex subunit 5 (37 aa).

The chain crosses the membrane as a helical span at residues 5–25; it reads LLSGIVLGLIVVTLAGLFYAA.

It belongs to the PetG family. The 4 large subunits of the cytochrome b6-f complex are cytochrome b6, subunit IV (17 kDa polypeptide, PetD), cytochrome f and the Rieske protein, while the 4 small subunits are PetG, PetL, PetM and PetN. The complex functions as a dimer.

The protein localises to the cellular thylakoid membrane. In terms of biological role, component of the cytochrome b6-f complex, which mediates electron transfer between photosystem II (PSII) and photosystem I (PSI), cyclic electron flow around PSI, and state transitions. PetG is required for either the stability or assembly of the cytochrome b6-f complex. In Anabaena variabilis, this protein is Cytochrome b6-f complex subunit 5.